The following is an 81-amino-acid chain: Putative phytosulfokines 6 (81 aa).

Positions 1–20 are cleaved as a signal peptide; it reads MKQSLCLAVLFLILSTSSSA. The propeptide occupies 21–72; the sequence is IRRGKEDQEINPLVSATSVEEDSVNKLMGMEYCGEGDEECLRRRMMTESHLD. Residues tyrosine 73 and tyrosine 75 each carry the sulfotyrosine modification. A propeptide spanning residues 78–81 is cleaved from the precursor; the sequence is HHKH.

It belongs to the phytosulfokine family. In terms of processing, sulfation is important for activity and for the binding to a putative membrane receptor. PSK-beta is an enzymatic derivative of PSK-alpha. Expressed in roots, leaves, stems, flowers and siliques. Most abundant in vascular bundles and in root tips.

It is found in the secreted. Promotes plant cell differentiation, organogenesis and somatic embryogenesis as well as cell proliferation. The sequence is that of Putative phytosulfokines 6 (PSK6) from Arabidopsis thaliana (Mouse-ear cress).